The chain runs to 72 residues: Translation initiation factor IF-1 (72 aa).

The region spanning 1–72 (MAKEDTLEFP…TKGRINYRFK (72 aa)) is the S1-like domain.

It belongs to the IF-1 family. Component of the 30S ribosomal translation pre-initiation complex which assembles on the 30S ribosome in the order IF-2 and IF-3, IF-1 and N-formylmethionyl-tRNA(fMet); mRNA recruitment can occur at any time during PIC assembly.

Its subcellular location is the cytoplasm. In terms of biological role, one of the essential components for the initiation of protein synthesis. Stabilizes the binding of IF-2 and IF-3 on the 30S subunit to which N-formylmethionyl-tRNA(fMet) subsequently binds. Helps modulate mRNA selection, yielding the 30S pre-initiation complex (PIC). Upon addition of the 50S ribosomal subunit IF-1, IF-2 and IF-3 are released leaving the mature 70S translation initiation complex. This Roseobacter denitrificans (strain ATCC 33942 / OCh 114) (Erythrobacter sp. (strain OCh 114)) protein is Translation initiation factor IF-1.